A 299-amino-acid chain; its full sequence is ATP phosphoribosyltransferase (299 aa).

Belongs to the ATP phosphoribosyltransferase family. Long subfamily. It depends on Mg(2+) as a cofactor.

Its subcellular location is the cytoplasm. The catalysed reaction is 1-(5-phospho-beta-D-ribosyl)-ATP + diphosphate = 5-phospho-alpha-D-ribose 1-diphosphate + ATP. It functions in the pathway amino-acid biosynthesis; L-histidine biosynthesis; L-histidine from 5-phospho-alpha-D-ribose 1-diphosphate: step 1/9. Its activity is regulated as follows. Feedback inhibited by histidine. Its function is as follows. Catalyzes the condensation of ATP and 5-phosphoribose 1-diphosphate to form N'-(5'-phosphoribosyl)-ATP (PR-ATP). Has a crucial role in the pathway because the rate of histidine biosynthesis seems to be controlled primarily by regulation of HisG enzymatic activity. The polypeptide is ATP phosphoribosyltransferase (Shewanella baltica (strain OS155 / ATCC BAA-1091)).